The following is a 104-amino-acid chain: MSHTILLVQPGARPETRTYCDYESVNECMEGVCKIYEEHLKRRNPNTPTITYDISQLFDFIDTLIDISCLVYQKSTNTYAPYNKDWIKEKIYVLLRQAAFSPNA.

A Phosphothreonine; by CK2 modification is found at T18. Position 24 is a phosphoserine; by CK2 (S24).

It belongs to the E(R) family.

In terms of biological role, acts as an enhancer of the rudimentary gene. Has a role in pyrimidine biosynthesis and the cell cycle. The protein is Protein enhancer of rudimentary (e(r)) of Drosophila virilis (Fruit fly).